We begin with the raw amino-acid sequence, 348 residues long: Chaperone protein DnaJ (348 aa).

Residues 3–65 (DLYGILGVDH…EQRQRYDRHV (63 aa)) form the J domain. The segment at 109–191 (GGSQVVKIDS…CYGNGSRSAP (83 aa)) adopts a CR-type zinc-finger fold. Zn(2+) contacts are provided by Cys-122, Cys-125, Cys-139, Cys-142, Cys-165, Cys-168, Cys-179, and Cys-182. CXXCXGXG motif repeat units follow at residues 122–129 (CDVCNGTR), 139–146 (CFDCNGSG), 165–172 (CSKCRGNG), and 179–186 (CRRCYGNG).

It belongs to the DnaJ family. In terms of assembly, homodimer. Requires Zn(2+) as cofactor.

Its subcellular location is the cytoplasm. In terms of biological role, participates actively in the response to hyperosmotic and heat shock by preventing the aggregation of stress-denatured proteins and by disaggregating proteins, also in an autonomous, DnaK-independent fashion. Unfolded proteins bind initially to DnaJ; upon interaction with the DnaJ-bound protein, DnaK hydrolyzes its bound ATP, resulting in the formation of a stable complex. GrpE releases ADP from DnaK; ATP binding to DnaK triggers the release of the substrate protein, thus completing the reaction cycle. Several rounds of ATP-dependent interactions between DnaJ, DnaK and GrpE are required for fully efficient folding. Also involved, together with DnaK and GrpE, in the DNA replication of plasmids through activation of initiation proteins. The protein is Chaperone protein DnaJ of Tropheryma whipplei (strain TW08/27) (Whipple's bacillus).